The chain runs to 317 residues: tRNA dimethylallyltransferase (317 aa).

An ATP-binding site is contributed by 14–21 (GPTASGKT). Substrate is bound at residue 16–21 (TASGKT). Interaction with substrate tRNA stretches follow at residues 39-42 (DSAL), 163-167 (QRIQR), and 248-253 (RCVGYR).

This sequence belongs to the IPP transferase family. Monomer. Mg(2+) serves as cofactor.

It catalyses the reaction adenosine(37) in tRNA + dimethylallyl diphosphate = N(6)-dimethylallyladenosine(37) in tRNA + diphosphate. Catalyzes the transfer of a dimethylallyl group onto the adenine at position 37 in tRNAs that read codons beginning with uridine, leading to the formation of N6-(dimethylallyl)adenosine (i(6)A). The sequence is that of tRNA dimethylallyltransferase from Paraburkholderia phymatum (strain DSM 17167 / CIP 108236 / LMG 21445 / STM815) (Burkholderia phymatum).